Consider the following 259-residue polypeptide: Ribosomal RNA small subunit methyltransferase J (259 aa).

S-adenosyl-L-methionine-binding positions include 101-102, 117-118, 153-154, and Asp-176; these read RD, ER, and SS.

It belongs to the methyltransferase superfamily. RsmJ family.

It localises to the cytoplasm. The enzyme catalyses guanosine(1516) in 16S rRNA + S-adenosyl-L-methionine = N(2)-methylguanosine(1516) in 16S rRNA + S-adenosyl-L-homocysteine + H(+). Its function is as follows. Specifically methylates the guanosine in position 1516 of 16S rRNA. The polypeptide is Ribosomal RNA small subunit methyltransferase J (Vibrio vulnificus (strain CMCP6)).